A 424-amino-acid chain; its full sequence is MAKPNQRHACDRCHGQKLRCIHSGGGPCVRCAKAKATCSWSQSLRSNRLKRHNVPISDVPLACAQLATQSTDPNTPQFGAYMSQPSSAGVDIDINLLQTQFTDSTPWALPAGRYPSPASQEMETYNVGHTEADLPTTADWMWPAVANGPVQTTPPANWQQAFNQEWAMMASQHPVATMNTPSRTSPVSDAVDPPNTVCLLATIRELSELNVDLYAHEATVPRPPASLDEPISWKNKDFAIDRTFHLSQRLIEIVNKRYPRYLETARMQTPEGTPERTSESSPSGPPLDQGSCLLVLSCYTRLIETYDRIFANMQGCLDRSSVTAREDYVNMPSVQVGSFSLPHSSSLQIVLILQLARQLLTRMGEIIKAVQPEKGTNSADVTLSESATGGLLLSSALETVSAEEDRLMKRITKLRSTLIELNIL.

A DNA-binding region (zn(2)-C6 fungal-type) is located at residues 10–38 (CDRCHGQKLRCIHSGGGPCVRCAKAKATC). A disordered region spans residues 265 to 286 (ARMQTPEGTPERTSESSPSGPP).

The protein resides in the nucleus. Its function is as follows. Transcription factor that regulates the expression of the gene cluster that mediates the biosynthesis of isoflavipucine. In Aspergillus terreus (strain NIH 2624 / FGSC A1156), this protein is Isoflavipucine cluster transcription factor ATEG_00326.